The following is a 466-amino-acid chain: MKSVSIIDIIEKKIFKKKLVEINGWVRTKRNSKLGISFVDVYDGSCLQHIQVIAKKDLSNYKSDILRLTSGCSVKIFGVLKKSLKNSKIYELHATCIKVLGWIKDPGKYPISSKPHTLEYLRSFSHLRPRTNIIGSVSRIRNIIFQEVHNFLNKKGFIWVPSPIITSLNTEGSGEMFKVSTFDFKKIPLNKNKLINYRKDFFGKRTFLTVSGQLHIESYACSLSKVYTFGPTFRAENSNTSRHLAEFWMVEIEIAFAKLNDIILLAYNLLSNIFKKVLNKCLNDLIFLEKKLNINIIKKLKNFIEKKLIEVEYCEAIRILKNCEKNFRIQLKWGMDLSSEHERYLSDLYYKSHIVIKNYPKEIKAFYMRLNKDKKTVAAADILLPGIGEIIGGSEREDRLEYLDSMIKEKRLIHKNYEWYRDLRKYGTVPHSGFGLGIERLISYVTGLKNIRDVIPFPRSSKNASF.

The protein belongs to the class-II aminoacyl-tRNA synthetase family. Homodimer.

It localises to the cytoplasm. It carries out the reaction tRNA(Asn) + L-asparagine + ATP = L-asparaginyl-tRNA(Asn) + AMP + diphosphate + H(+). The polypeptide is Asparagine--tRNA ligase (Wigglesworthia glossinidia brevipalpis).